Consider the following 166-residue polypeptide: Transcription elongation factor GreA (166 aa).

This sequence belongs to the GreA/GreB family.

Necessary for efficient RNA polymerase transcription elongation past template-encoded arresting sites. The arresting sites in DNA have the property of trapping a certain fraction of elongating RNA polymerases that pass through, resulting in locked ternary complexes. Cleavage of the nascent transcript by cleavage factors such as GreA or GreB allows the resumption of elongation from the new 3'terminus. GreA releases sequences of 2 to 3 nucleotides. The protein is Transcription elongation factor GreA of Anaeromyxobacter sp. (strain K).